Reading from the N-terminus, the 138-residue chain is Fluoride-specific ion channel FluC (138 aa).

Helical transmembrane passes span 34–54 (FMPK…GACA), 60–80 (MQFG…SFLM), 88–108 (FWGT…VVLV), and 112–132 (LPHA…AWLM). Positions 95 and 98 each coordinate Na(+).

It belongs to the fluoride channel Fluc/FEX (TC 1.A.43) family.

The protein resides in the cell membrane. It carries out the reaction fluoride(in) = fluoride(out). Its activity is regulated as follows. Na(+) is not transported, but it plays an essential structural role and its presence is essential for fluoride channel function. Functionally, fluoride-specific ion channel. Important for reducing fluoride concentration in the cell, thus reducing its toxicity. The chain is Fluoride-specific ion channel FluC from Corynebacterium efficiens (strain DSM 44549 / YS-314 / AJ 12310 / JCM 11189 / NBRC 100395).